The primary structure comprises 547 residues: Chaperonin GroEL (547 aa).

ATP-binding positions include 29-32 (TLGP), K50, 86-90 (DGTTT), G414, and D495. The interval 525–547 (PSDKEDSIPPMRGGMGGMGGMDF) is disordered. The span at 537–547 (GGMGGMGGMDF) shows a compositional bias: gly residues.

Belongs to the chaperonin (HSP60) family. Forms a cylinder of 14 subunits composed of two heptameric rings stacked back-to-back. Interacts with the co-chaperonin GroES.

The protein resides in the cytoplasm. It catalyses the reaction ATP + H2O + a folded polypeptide = ADP + phosphate + an unfolded polypeptide.. Functionally, together with its co-chaperonin GroES, plays an essential role in assisting protein folding. The GroEL-GroES system forms a nano-cage that allows encapsulation of the non-native substrate proteins and provides a physical environment optimized to promote and accelerate protein folding. This chain is Chaperonin GroEL, found in Rickettsia felis (strain ATCC VR-1525 / URRWXCal2) (Rickettsia azadi).